The following is a 426-amino-acid chain: Serine--tRNA ligase (426 aa).

The disordered stretch occupies residues 44–67 (TEKQALQSERNATSKQIGMLKKKG). Over residues 47–59 (QALQSERNATSKQ) the composition is skewed to polar residues. An L-serine-binding site is contributed by 231 to 233 (TAE). Residues 262-264 (RRE) and valine 278 each bind ATP. Glutamate 285 lines the L-serine pocket. 349-352 (EVSS) is a binding site for ATP. Serine 384 lines the L-serine pocket.

It belongs to the class-II aminoacyl-tRNA synthetase family. Type-1 seryl-tRNA synthetase subfamily. In terms of assembly, homodimer. The tRNA molecule binds across the dimer.

The protein resides in the cytoplasm. It carries out the reaction tRNA(Ser) + L-serine + ATP = L-seryl-tRNA(Ser) + AMP + diphosphate + H(+). The catalysed reaction is tRNA(Sec) + L-serine + ATP = L-seryl-tRNA(Sec) + AMP + diphosphate + H(+). It functions in the pathway aminoacyl-tRNA biosynthesis; selenocysteinyl-tRNA(Sec) biosynthesis; L-seryl-tRNA(Sec) from L-serine and tRNA(Sec): step 1/1. In terms of biological role, catalyzes the attachment of serine to tRNA(Ser). Is also able to aminoacylate tRNA(Sec) with serine, to form the misacylated tRNA L-seryl-tRNA(Sec), which will be further converted into selenocysteinyl-tRNA(Sec). This chain is Serine--tRNA ligase, found in Akkermansia muciniphila (strain ATCC BAA-835 / DSM 22959 / JCM 33894 / BCRC 81048 / CCUG 64013 / CIP 107961 / Muc).